The chain runs to 544 residues: MGDCVAPKEDLIFRSKLPDIYIPKHLPLHTYCFENISKVGDKSCLINGATGETFTYSQVELLSRKVASGLNKLGIQQGDTIMLLLPNSPEYFFAFLGASYRGAISTMANPFFTSAEVIKQLKASLAKLIITQACYVDKVKDYAAEKNIQIICIDDAPQDCLHFSKLMEADESEMPEVVIDSDDVVALPYSSGTTGLPKGVMLTHKGLVTSVAQQVDGDNPNLYMHSEDVMICILPLFHIYSLNAVLCCGLRAGVTILIMQKFDIVPFLELIQKYKVTIGPFVPPIVLAIAKSPVVDKYDLSSVRTVMSGAAPLGKELEDAVRAKFPNAKLGQGYGMTEAGPVLAMCLAFAKEPYEIKSGACGTVVRNAEMKIVDPETNASLPRNQRGEICIRGDQIMKGYLNDPESTRTTIDEEGWLHTGDIGFIDDDDELFIVDRLKEIIKYKGFQVAPAELEALLLTHPTISDAAVVPMIDEKAGEVPVAFVVRTNGFTTTEEEIKQFVSKQVVFYKRIFRVFFVDAIPKSPSGKILRKDLRAKIASGDLPK.

Positions 190, 191, 192, 193, 194, and 198 each coordinate ATP. A (E)-4-coumaroyl-AMP-binding site is contributed by tyrosine 240. Lysine 261 serves as a coordination point for CoA. The interval 263 to 332 (DIVPFLELIQ…AKFPNAKLGQ (70 aa)) is SBD1. (E)-4-coumaroyl-AMP contacts are provided by alanine 310, glutamine 332, glycine 333, threonine 337, and methionine 345. ATP-binding residues include glutamine 332, glycine 333, and threonine 337. Positions 333–400 (GYGMTEAGPV…IRGDQIMKGY (68 aa)) are SBD2. Positions 421 and 436 each coordinate ATP. Lysine 438 and lysine 442 together coordinate (E)-4-coumaroyl-AMP. Lysine 444 and glycine 445 together coordinate CoA. Lysine 527 contacts ATP.

The protein belongs to the ATP-dependent AMP-binding enzyme family. Mg(2+) is required as a cofactor.

It catalyses the reaction (E)-4-coumarate + ATP + CoA = (E)-4-coumaroyl-CoA + AMP + diphosphate. The enzyme catalyses (E)-4-coumarate + ATP + H(+) = (E)-4-coumaroyl-AMP + diphosphate. It carries out the reaction (E)-4-coumaroyl-AMP + CoA = (E)-4-coumaroyl-CoA + AMP + H(+). It functions in the pathway phytoalexin biosynthesis; 3,4',5-trihydroxystilbene biosynthesis; 3,4',5-trihydroxystilbene from trans-4-coumarate: step 1/2. Its function is as follows. Carboxylate--CoA ligase that may use 4-coumarate as substrate. Follows a two-step reaction mechanism, wherein the carboxylate substrate first undergoes adenylation by ATP, followed by a thioesterification in the presence of CoA to yield the final CoA thioester. This chain is 4-coumarate--CoA ligase 2 (4CL2), found in Petroselinum crispum (Parsley).